The primary structure comprises 152 residues: uncharacterized protein (152 aa).

The next 4 membrane-spanning stretches (helical) occupy residues 2 to 22, 26 to 46, 92 to 112, and 128 to 148; these read ENLI…LSFL, FITF…HLIE, VVPI…FILL, and YIIT…YFLK.

Its subcellular location is the membrane. This is an uncharacterized protein from Acanthamoeba polyphaga mimivirus (APMV).